Here is a 379-residue protein sequence, read N- to C-terminus: L-lactate dehydrogenase (379 aa).

One can recognise an FMN hydroxy acid dehydrogenase domain in the interval 1–379; that stretch reads MIISASTDYR…ITSDLLVKER (379 aa). Tyrosine 24 is a binding site for substrate. FMN is bound by residues serine 106 and glutamine 127. Position 129 (tyrosine 129) interacts with substrate. Threonine 155 contacts FMN. Arginine 164 is a binding site for substrate. Lysine 251 serves as a coordination point for FMN. Histidine 275 functions as the Proton acceptor in the catalytic mechanism. Arginine 278 serves as a coordination point for substrate. Residue 306-330 participates in FMN binding; that stretch reads DSGIRTGLDVVRMLALGADTVLLGR.

This sequence belongs to the FMN-dependent alpha-hydroxy acid dehydrogenase family. As to quaternary structure, homotetramer. FMN is required as a cofactor.

The protein localises to the cell inner membrane. The catalysed reaction is (S)-lactate + A = pyruvate + AH2. Its function is as follows. Catalyzes the conversion of L-lactate to pyruvate. Is coupled to the respiratory chain. This chain is L-lactate dehydrogenase, found in Ectopseudomonas mendocina (strain ymp) (Pseudomonas mendocina).